Reading from the N-terminus, the 263-residue chain is MPEGPEIRRAADNLEAAIKGKPLTDVWFAFPQLKTYQSQLIGQHVTHVETRGKALLTHFSNDLTLYSHNQLYGVWRVVDTGEESQTTRVLRVKLQTADKTILLYSASDIEMLTPEQLTMHPFLQRVGPDVLDPNLTPEVVKERLLSPRFRNRQFAGLLLDQAFLAGLGNYLRVEILWQVGLTGNHKAKDLNAAQLDALAHALLDIPRFSYATRGQVDENKHHGALFRFKVFHRDGELCERCGGIIEKTTLSSRPFYWCPGCQH.

The active-site Schiff-base intermediate with DNA is Pro-2. Glu-3 acts as the Proton donor in catalysis. Lys-53 functions as the Proton donor; for beta-elimination activity in the catalytic mechanism. The DNA site is built by Gln-70, Arg-125, and Asn-169. The FPG-type zinc-finger motif lies at 229–263 (KVFHRDGELCERCGGIIEKTTLSSRPFYWCPGCQH). Arg-253 functions as the Proton donor; for delta-elimination activity in the catalytic mechanism.

This sequence belongs to the FPG family. Zn(2+) is required as a cofactor.

The enzyme catalyses 2'-deoxyribonucleotide-(2'-deoxyribose 5'-phosphate)-2'-deoxyribonucleotide-DNA = a 3'-end 2'-deoxyribonucleotide-(2,3-dehydro-2,3-deoxyribose 5'-phosphate)-DNA + a 5'-end 5'-phospho-2'-deoxyribonucleoside-DNA + H(+). Functionally, involved in base excision repair of DNA damaged by oxidation or by mutagenic agents. Acts as a DNA glycosylase that recognizes and removes damaged bases. Has a preference for oxidized pyrimidines, such as thymine glycol, 5,6-dihydrouracil and 5,6-dihydrothymine. Has AP (apurinic/apyrimidinic) lyase activity and introduces nicks in the DNA strand. Cleaves the DNA backbone by beta-delta elimination to generate a single-strand break at the site of the removed base with both 3'- and 5'-phosphates. The polypeptide is Endonuclease 8 (Shigella dysenteriae serotype 1 (strain Sd197)).